A 428-amino-acid chain; its full sequence is MFIDKAKVFIKSGKGGDGAISFRREKYVPLGGPNGGDGGDGGDIILQVDTGITTLLDFKYKKKFIAEDGENGGASKCYGRAGQDLIIKVPMGTIIREEESNKVIVDLSKKGQEFVLVRGGRGGKGNTKFATATRQAPHYAEPGMPGEELSIVLELKLLADVGLLGFPNVGKSTLLSMTTKATPKIANYHFTTLKPNLGVVAIDGIEPFVMADIPGIIEGAAEGVGLGIQFLKHIERTRLLVHIVDISGIEGREPFEDFVKINEELKKYSVKLWDRPQIVVANKSDLLYDDEVFEEFERKVKELGFAKVYKMSAATRDGVDEVIKEAARMLKEIPVKELEISEDEMYIPEEKRFTYVIDIEKDDEYNTYVISGTFVDRLLSAVNIHDADSLRYFHKVLKNKGIMNELREMGIEDGDVVRLNDFEFEYLL.

The Obg domain occupies 1–158; the sequence is MFIDKAKVFI…LSIVLELKLL (158 aa). In terms of domain architecture, OBG-type G spans 159–331; that stretch reads ADVGLLGFPN…VIKEAARMLK (173 aa). GTP contacts are provided by residues 165 to 172, 190 to 194, 212 to 215, 282 to 285, and 312 to 314; these read GFPNVGKS, FTTLK, DIPG, NKSD, and SAA. Positions 172 and 192 each coordinate Mg(2+). Residues 345-428 form the OCT domain; sequence MYIPEEKRFT…LNDFEFEYLL (84 aa).

The protein belongs to the TRAFAC class OBG-HflX-like GTPase superfamily. OBG GTPase family. As to quaternary structure, monomer. Mg(2+) serves as cofactor.

The protein localises to the cytoplasm. In terms of biological role, an essential GTPase which binds GTP, GDP and possibly (p)ppGpp with moderate affinity, with high nucleotide exchange rates and a fairly low GTP hydrolysis rate. Plays a role in control of the cell cycle, stress response, ribosome biogenesis and in those bacteria that undergo differentiation, in morphogenesis control. The chain is GTPase Obg from Clostridium botulinum (strain Eklund 17B / Type B).